The chain runs to 318 residues: Potassium channel subfamily K member 15 (318 aa).

Residues 1–8 (MRKQSART) are Cytoplasmic-facing. A helical transmembrane segment spans residues 9-29 (AALILCILSYLLVGAAVFDAL). Residues 80 to 101 (FAGSFYFAITVITTIGYGHAAP) constitute an intramembrane region (pore-forming). A helical membrane pass occupies residues 108-128 (VFCMFYALLGIPLTLVTFQSL). The Cytoplasmic portion of the chain corresponds to 129 to 158 (GERLNALVRCLLLAAKRCLGLRRPHVSAEN). Residues 159–179 (MVVAGLLLCAATLALGAAAFA) form a helical membrane-spanning segment. The pore-forming intramembrane region spans 189–209 (AYYYCFITLTTIGFGDFVALQ). The helical transmembrane segment at 223–243 (FSFLYILLGLTVIGAFLNLVV) threads the bilayer. Topologically, residues 244-318 (LRFLASAEAP…DRLRARRKSI (75 aa)) are cytoplasmic. The interval 296-318 (LSPEAVHDCHSSPDRLRARRKSI) is disordered. Basic and acidic residues predominate over residues 300 to 311 (AVHDCHSSPDRL).

It belongs to the two pore domain potassium channel (TC 1.A.1.8) family. As to quaternary structure, heterodimer. Phosphorylated. Brain-specific. Highly expressed in auditory nuclei, in Purkinje cells and in olfactory bulb mitral cells.

The protein resides in the membrane. In terms of biological role, probable potassium channel subunit. No channel activity observed in heterologous systems. May need to associate with another protein to form a functional channel. The polypeptide is Potassium channel subfamily K member 15 (Kcnk15) (Rattus norvegicus (Rat)).